The chain runs to 671 residues: UvrABC system protein B (671 aa).

The 389-residue stretch at 35–423 folds into the Helicase ATP-binding domain; it reads KAIIENKKHQ…NHQVVQQIIR (389 aa). 48–55 contacts ATP; that stretch reads GATGTGKT. Residues 101-124 carry the Beta-hairpin motif; that stretch reads NFDFFQPEAYIPSKDLYIDKDSRQ. Positions 440–602 constitute a Helicase C-terminal domain; the sequence is QIDDIINEIH…IVPKTISKAI (163 aa). Residues 632-667 form the UVR domain; that stretch reads QQTIDNLRQEMLQAAKELDFERAAILRDTIIELENE.

Belongs to the UvrB family. Forms a heterotetramer with UvrA during the search for lesions. Interacts with UvrC in an incision complex.

Its subcellular location is the cytoplasm. Functionally, the UvrABC repair system catalyzes the recognition and processing of DNA lesions. A damage recognition complex composed of 2 UvrA and 2 UvrB subunits scans DNA for abnormalities. Upon binding of the UvrA(2)B(2) complex to a putative damaged site, the DNA wraps around one UvrB monomer. DNA wrap is dependent on ATP binding by UvrB and probably causes local melting of the DNA helix, facilitating insertion of UvrB beta-hairpin between the DNA strands. Then UvrB probes one DNA strand for the presence of a lesion. If a lesion is found the UvrA subunits dissociate and the UvrB-DNA preincision complex is formed. This complex is subsequently bound by UvrC and the second UvrB is released. If no lesion is found, the DNA wraps around the other UvrB subunit that will check the other stand for damage. This Mycoplasma mycoides subsp. mycoides SC (strain CCUG 32753 / NCTC 10114 / PG1) protein is UvrABC system protein B.